A 457-amino-acid chain; its full sequence is Serine--tRNA ligase (457 aa).

252–254 (TAE) is a binding site for L-serine. Residues 283 to 285 (RKE) and Val-299 each bind ATP. Glu-306 contributes to the L-serine binding site. 370–373 (EVVS) contributes to the ATP binding site. Thr-406 provides a ligand contact to L-serine.

It belongs to the class-II aminoacyl-tRNA synthetase family. Type-1 seryl-tRNA synthetase subfamily. In terms of assembly, homodimer. The tRNA molecule binds across the dimer.

Its subcellular location is the cytoplasm. The catalysed reaction is tRNA(Ser) + L-serine + ATP = L-seryl-tRNA(Ser) + AMP + diphosphate + H(+). It carries out the reaction tRNA(Sec) + L-serine + ATP = L-seryl-tRNA(Sec) + AMP + diphosphate + H(+). The protein operates within aminoacyl-tRNA biosynthesis; selenocysteinyl-tRNA(Sec) biosynthesis; L-seryl-tRNA(Sec) from L-serine and tRNA(Sec): step 1/1. Catalyzes the attachment of serine to tRNA(Ser). Is also able to aminoacylate tRNA(Sec) with serine, to form the misacylated tRNA L-seryl-tRNA(Sec), which will be further converted into selenocysteinyl-tRNA(Sec). This Thermococcus onnurineus (strain NA1) protein is Serine--tRNA ligase.